The following is a 578-amino-acid chain: Forkhead box protein P1 (578 aa).

The segment at 208 to 233 adopts a C2H2-type zinc-finger fold; the sequence is GVCKWPGCETICEDFPSFLKHLNSEH. The tract at residues 250–271 is leucine-zipper; sequence VQQLELQLSKDKERLQAMMSHL. Residues 284–288 are ctbp1-binding; it reads PLNLV. Residues 293–305 show a composition bias toward polar residues; it reads LSKTASEASPQSL. A disordered region spans residues 293 to 325; it reads LSKTASEASPQSLPHTPTTPTAPLTPITQGPSV. Residues 306–320 are compositionally biased toward low complexity; sequence PHTPTTPTAPLTPIT. Positions 366-456 form a DNA-binding region, fork-head; the sequence is RPPFTYASLI…PQKISGSPTL (91 aa). The tract at residues 511–578 is disordered; sequence MEHTSSNGSD…EDDPVNDDME (68 aa). The segment covering 515–527 has biased composition (low complexity); that stretch reads SSNGSDSSPGRSP. Residues 568-578 are compositionally biased toward acidic residues; that stretch reads YEDDPVNDDME.

In terms of assembly, dimerization is required for DNA-binding. Isoform a, but not isoform b, interacts with ctbp1. As to expression, all isoforms show similar spatial expression. Localized to the animal hemisphere of early cleavage stage embryos. At tailbud stages, expressed in regions of the brain, eye and the splanchnic mesodermal layer of the lateral plate mesoderm surrounding the gut. At stage 35, expressed within the lens of the eye, in distinct regions of the head mesenchyme and in the area anterior to the gut. In the brain the anterior-most expression is restricted to the outer region of the mesencephalon. With ongoing development, additional expression is found in the curling gut.

Its subcellular location is the nucleus. In terms of biological role, transcriptional repressor. The chain is Forkhead box protein P1 from Xenopus laevis (African clawed frog).